The chain runs to 558 residues: Potassium-transporting ATPase potassium-binding subunit 2 (558 aa).

12 helical membrane passes run 1 to 21, 60 to 80, 129 to 149, 169 to 189, 246 to 266, 281 to 301, 326 to 346, 353 to 373, 376 to 396, 415 to 435, 485 to 505, and 523 to 543; these read MSIVLFLIVFILLSLIVSRYL, IKHFLLFNGLMGGLSFVLLLI, VITFLMFTSAASGYAVCIAML, FIVRVLIPFALIISLFLISQG, WSNYAEALSMMLIPGSLVFLF, IMIFVAMFVMFIGFLVTCLYF, FGIGLSALFTTITTAFTTGTV, LTPLGGMVPMVLMMLNAVFGG, VGLMNMLIYVMLTVFICSLMI, IALSFLVHPLLILVFSALAFI, IVMLLARYIPIVLQILIVSSL, and LFFSSVLIIFIILLSGLTFLP.

The protein belongs to the KdpA family. The system is composed of three essential subunits: KdpA, KdpB and KdpC.

It is found in the cell membrane. Part of the high-affinity ATP-driven potassium transport (or Kdp) system, which catalyzes the hydrolysis of ATP coupled with the electrogenic transport of potassium into the cytoplasm. This subunit binds the extracellular potassium ions and delivers the ions to the membrane domain of KdpB through an intramembrane tunnel. This is Potassium-transporting ATPase potassium-binding subunit 2 from Staphylococcus aureus (strain Mu50 / ATCC 700699).